Reading from the N-terminus, the 7763-residue chain is Nonribosomal peptide synthetase agiA (7763 aa).

The segment at 20–168 is condensation 1; the sequence is APSVMQEEMI…DGWSARALLE (149 aa). Residues 469 to 866 are adenylation 1; sequence EQAASKWPSK…GRADGQIKLR (398 aa). A Carrier 1 domain is found at 995 to 1071; that stretch reads LPESPAERLL…DVARAMSPSS (77 aa). Serine 1032 is modified (O-(pantetheine 4'-phosphoryl)serine). The segment at 1104–1526 is condensation 2; it reads IYPCTPQQEG…GLSDQKLITG (423 aa). The tract at residues 1562-1968 is adenylation 2; sequence FEMQADMTPQ…GRIDSQIKLR (407 aa). In terms of domain architecture, Carrier 2 spans 2090 to 2166; the sequence is WEQGSIEDKI…SQAKCATSHT (77 aa). Serine 2127 carries the O-(pantetheine 4'-phosphoryl)serine modification. The interval 2212-2556 is epimerase (E); that stretch reads DHFNQSVLLD…IMPLVFNYQG (345 aa). A condensation 3 region spans residues 2676-3016; that stretch reads DIIPCTPMQR…PALVNTLLNF (341 aa). The segment at 3136–3531 is adenylation 3; sequence WAAQVPEKVA…GRMDDQIKIR (396 aa). A Carrier 3 domain is found at 3667–3743; it reads GPESPTEIML…ELATILNTSY (77 aa). Serine 3704 carries the O-(pantetheine 4'-phosphoryl)serine modification. The segment at 3789–4238 is condensation 4; the sequence is VMPCTPFQEG…ISQSIDALVQ (450 aa). Positions 4321–4687 are adenylation 4; the sequence is VGSQQPIIPI…GRFDRQIKIR (367 aa). The region spanning 4806 to 4880 is the Carrier 4 domain; the sequence is APTTEREKVI…DLARQLESTA (75 aa). An O-(pantetheine 4'-phosphoryl)serine modification is found at serine 4840. The condensation 5 stretch occupies residues 4902–5339; the sequence is SFAQGRLWFL…ALLNDLSMHD (438 aa). The adenylation 5 stretch occupies residues 5361–5765; the sequence is FRQEARSHPD…GRRDDQVKIR (405 aa). An S-adenosyl-L-methionine-dependent N-methyltransferase region spans residues 5820-5975; the sequence is DAWKNVFDTE…YLSEIVQKLV (156 aa). One can recognise a Carrier 5 domain in the interval 6306–6381; it reads EYGSEMERIL…RLADRLLSKQ (76 aa). Serine 6341 bears the O-(pantetheine 4'-phosphoryl)serine mark. Residues 6378-6399 form a disordered region; the sequence is LSKQSDSNTEANTSTDGKTQHS. The span at 6379-6399 shows a compositional bias: polar residues; sequence SKQSDSNTEANTSTDGKTQHS. The segment at 6424–6883 is condensation 6; it reads MPCTPFQEGV…TVGDAEEAAL (460 aa). The tract at residues 6913–7327 is adenylation 6; sequence RQAMESPCKI…GRMDSQVKLR (415 aa). A Carrier 6 domain is found at 7446 to 7522; the sequence is PSPGTLEATL…SQAFRILCDV (77 aa). An O-(pantetheine 4'-phosphoryl)serine modification is found at serine 7483. The interval 7542–7638 is thioesterase (TE); sequence TMVLIHPFFG…TGKGSPFSTV (97 aa).

The protein belongs to the NRP synthetase family.

Nonribosomal peptide synthetase; part of the gene cluster that mediates the biosynthesis of the aspergillicins A and F, 2 cryptic cyclic hexa-depsipeptides. The hexamodular NRPS agiA catalyzes the condensation of the six amino acid residues including N-Me-L-O-Me-tyrosine, L-proline 1, L-proline 2, D-isoleucine, O-acetyl-threonine, and L-isoleucine. The starting condensation domain (C1) of agiA probably loads acetyl-CoA which is condensed on the N-terminus of threonine by the first module to yield O-acetyl-threonine. The second module then loads L-isoleucine. The epimerase (E) domain on module 2 is probably involved in the formation of the D-isoleucine moiety. Modules 3 and 4 further load 2 successive L-prolines. Module 5 is then involved in the condensation of O-Me-L-tyrosine produced by the O-methyltransferase agiB and the N-methyl transferase (NMeT) domain on module 5 probably catalyzes the N-methylation to yield the N-Me-L-O-Me-tyrosine moiety. The A domain of module 5 loads preferentially O-Me-L-tyrosine, but it can also accept L-phenylalanine, which leads to the production of aspergillicin G. Module 6 then loads the last residue, L-isoleucine. The C-terminal thiolesterase (TE) domain probably cyclizes the peptide using the hydroxy group from threonine to form the cyclic depsipeptide. The polypeptide is Nonribosomal peptide synthetase agiA (Aspergillus flavus (strain ATCC 200026 / FGSC A1120 / IAM 13836 / NRRL 3357 / JCM 12722 / SRRC 167)).